A 371-amino-acid chain; its full sequence is tRNA-specific 2-thiouridylase MnmA (371 aa).

Residues 13 to 20 (GMSGGVDS) and Met-39 each bind ATP. Positions 99–101 (NPD) are interaction with target base in tRNA. Cys-104 functions as the Nucleophile in the catalytic mechanism. A disulfide bond links Cys-104 and Cys-200. Gly-128 is a binding site for ATP. Positions 150–152 (KDQ) are interaction with tRNA. Residue Cys-200 is the Cysteine persulfide intermediate of the active site. Residues 308–309 (RY) form an interaction with tRNA region.

It belongs to the MnmA/TRMU family.

It is found in the cytoplasm. It catalyses the reaction S-sulfanyl-L-cysteinyl-[protein] + uridine(34) in tRNA + AH2 + ATP = 2-thiouridine(34) in tRNA + L-cysteinyl-[protein] + A + AMP + diphosphate + H(+). Catalyzes the 2-thiolation of uridine at the wobble position (U34) of tRNA, leading to the formation of s(2)U34. The sequence is that of tRNA-specific 2-thiouridylase MnmA from Bacillus thuringiensis (strain Al Hakam).